Reading from the N-terminus, the 100-residue chain is Large ribosomal subunit protein uL23 (100 aa).

The protein belongs to the universal ribosomal protein uL23 family. In terms of assembly, part of the 50S ribosomal subunit. Contacts protein L29, and trigger factor when it is bound to the ribosome.

Functionally, one of the early assembly proteins it binds 23S rRNA. One of the proteins that surrounds the polypeptide exit tunnel on the outside of the ribosome. Forms the main docking site for trigger factor binding to the ribosome. The polypeptide is Large ribosomal subunit protein uL23 (Synechococcus sp. (strain CC9902)).